A 772-amino-acid chain; its full sequence is Bromo adjacent homology domain-containing 1 protein (772 aa).

Disordered regions lie at residues 1–63 (MTHT…RSLV) and 77–117 (LENV…PRKR). Ser8 carries the post-translational modification Phosphoserine. Residues 49-61 (TGRRKNYPLRKRS) show a composition bias toward basic residues. A phosphoserine mark is found at Ser101 and Ser121. Disordered stretches follow at residues 131-357 (LLER…PADY), 521-582 (QTVA…RTNG), and 723-743 (PSRK…PHRT). 3 stretches are compositionally biased toward basic and acidic residues: residues 147–158 (RGGDPHRSRDRA), 170–182 (RLGD…RDLS), and 189–199 (EGARRDGDPAP). Position 182 is a phosphoserine (Ser182). Ser204 bears the Phosphoserine mark. Pro residues predominate over residues 280 to 289 (SAPPHGPPTQ). The span at 299-310 (LENPLRPNLPLL) shows a compositional bias: low complexity. Pro residues predominate over residues 340–352 (FPAPQLSPLPMPG). The segment covering 536 to 548 (GSKSGLRTGSSCR) has biased composition (polar residues). A compositionally biased stretch (basic residues) spans 549-580 (HTVRSKAARRPSHPKQPRAQRPRPRRRRRRRT). The residue at position 580 (Thr580) is a Phosphothreonine. A BAH domain is found at 616-771 (ETIRVRDTVL…FRHGRILKNP (156 aa)).

Interacts with CBX5 (HP1 alpha), HDAC5, MBD1 and SP1. Post-translationally, ubiquitinated in a FBXO11-dependent manner; leading to degradation.

The protein resides in the nucleus. Its subcellular location is the chromosome. Functionally, heterochromatin protein that acts as a transcription repressor and has the ability to promote the formation of large heterochromatic domains. May act by recruiting heterochromatin proteins such as CBX5 (HP1 alpha), HDAC5 and MBD1. Represses IGF2 expression by binding to its CpG-rich P3 promoter and recruiting heterochromatin proteins. This chain is Bromo adjacent homology domain-containing 1 protein (Bahd1), found in Mus musculus (Mouse).